The primary structure comprises 251 residues: 3-deoxy-manno-octulosonate cytidylyltransferase (251 aa).

It belongs to the KdsB family.

Its subcellular location is the cytoplasm. It carries out the reaction 3-deoxy-alpha-D-manno-oct-2-ulosonate + CTP = CMP-3-deoxy-beta-D-manno-octulosonate + diphosphate. It functions in the pathway nucleotide-sugar biosynthesis; CMP-3-deoxy-D-manno-octulosonate biosynthesis; CMP-3-deoxy-D-manno-octulosonate from 3-deoxy-D-manno-octulosonate and CTP: step 1/1. It participates in bacterial outer membrane biogenesis; lipopolysaccharide biosynthesis. Activates KDO (a required 8-carbon sugar) for incorporation into bacterial lipopolysaccharide in Gram-negative bacteria. This Rhizobium etli (strain ATCC 51251 / DSM 11541 / JCM 21823 / NBRC 15573 / CFN 42) protein is 3-deoxy-manno-octulosonate cytidylyltransferase.